A 395-amino-acid polypeptide reads, in one-letter code: 1-deoxy-D-xylulose 5-phosphate reductoisomerase (395 aa).

The NADPH site is built by Thr15, Gly16, Ser17, Ile18, Gly41, Asn43, and Asn126. Residue Lys127 participates in 1-deoxy-D-xylulose 5-phosphate binding. NADPH is bound at residue Glu128. Asp152 contributes to the Mn(2+) binding site. 1-deoxy-D-xylulose 5-phosphate contacts are provided by Ser153, Glu154, Ser178, and His201. Glu154 is a binding site for Mn(2+). NADPH is bound at residue Gly207. 1-deoxy-D-xylulose 5-phosphate is bound by residues Ser214, Asn219, Lys220, and Glu223. Glu223 lines the Mn(2+) pocket.

It belongs to the DXR family. Mg(2+) serves as cofactor. Requires Mn(2+) as cofactor.

It carries out the reaction 2-C-methyl-D-erythritol 4-phosphate + NADP(+) = 1-deoxy-D-xylulose 5-phosphate + NADPH + H(+). The protein operates within isoprenoid biosynthesis; isopentenyl diphosphate biosynthesis via DXP pathway; isopentenyl diphosphate from 1-deoxy-D-xylulose 5-phosphate: step 1/6. In terms of biological role, catalyzes the NADPH-dependent rearrangement and reduction of 1-deoxy-D-xylulose-5-phosphate (DXP) to 2-C-methyl-D-erythritol 4-phosphate (MEP). The protein is 1-deoxy-D-xylulose 5-phosphate reductoisomerase of Ruegeria sp. (strain TM1040) (Silicibacter sp.).